Here is a 911-residue protein sequence, read N- to C-terminus: Protein translocase subunit SecA (911 aa).

ATP contacts are provided by residues Gln86, 104–108, and Asp512; that span reads GEGKT. The disordered stretch occupies residues 869–888; that stretch reads ALADDGQPQGAQPVRNVLPK. 4 residues coordinate Zn(2+): Cys895, Cys897, Cys906, and His907.

This sequence belongs to the SecA family. In terms of assembly, monomer and homodimer. Part of the essential Sec protein translocation apparatus which comprises SecA, SecYEG and auxiliary proteins SecDF-YajC and YidC. Zn(2+) is required as a cofactor.

Its subcellular location is the cell inner membrane. The protein resides in the cytoplasm. The catalysed reaction is ATP + H2O + cellular proteinSide 1 = ADP + phosphate + cellular proteinSide 2.. Functionally, part of the Sec protein translocase complex. Interacts with the SecYEG preprotein conducting channel. Has a central role in coupling the hydrolysis of ATP to the transfer of proteins into and across the cell membrane, serving both as a receptor for the preprotein-SecB complex and as an ATP-driven molecular motor driving the stepwise translocation of polypeptide chains across the membrane. The sequence is that of Protein translocase subunit SecA from Bordetella parapertussis (strain 12822 / ATCC BAA-587 / NCTC 13253).